Reading from the N-terminus, the 479-residue chain is Ubiquinone biosynthesis monooxygenase COQ6, mitochondrial (479 aa).

The N-terminal 17 residues, 1–17 (MFFSKVMLTRRILVRGL), are a transit peptide targeting the mitochondrion.

This sequence belongs to the UbiH/COQ6 family. As to quaternary structure, component of a multi-subunit COQ enzyme complex, composed of at least COQ3, COQ4, COQ5, COQ6, COQ7 and COQ9. FAD is required as a cofactor.

It localises to the mitochondrion inner membrane. It carries out the reaction 4-hydroxy-3-(all-trans-hexaprenyl)benzoate + 2 reduced [2Fe-2S]-[ferredoxin] + O2 + 2 H(+) = 3,4-dihydroxy-5-(all-trans-hexaprenyl)benzoate + 2 oxidized [2Fe-2S]-[ferredoxin] + H2O. The catalysed reaction is 2-methoxy-6-(all-trans-hexaprenyl)phenol + 2 reduced [2Fe-2S]-[ferredoxin] + O2 + 2 H(+) = 2-methoxy-6-(all-trans-hexaprenyl)benzene-1,4-diol + 2 oxidized [2Fe-2S]-[ferredoxin] + H2O. It catalyses the reaction 4-amino-3-(all-trans-hexaprenyl)benzoate + 2 reduced [2Fe-2S]-[ferredoxin] + O2 + 2 H(+) = 4-amino-5-hydroxy-3-(all-trans-hexaprenyl)benzoate + 2 oxidized [2Fe-2S]-[ferredoxin] + H2O. The enzyme catalyses 4-amino-5-hydroxy-3-(all-trans-hexaprenyl)benzoate + 4 reduced [2Fe-2S]-[ferredoxin] + O2 + 5 H(+) = 3,4-dihydroxy-5-(all-trans-hexaprenyl)benzoate + 4 oxidized [2Fe-2S]-[ferredoxin] + NH4(+) + H2O. Its pathway is cofactor biosynthesis; ubiquinone biosynthesis. FAD-dependent monooxygenase required for two non-consecutive steps during ubiquinone biosynthesis. Required for the C5-ring hydroxylation during ubiquinone biosynthesis by catalyzing the hydroxylation of 4-hydroxy-3-(all-trans-hexaprenyl)benzoic acid to 3,4-dihydroxy-5-(all-trans-hexaprenyl)benzoic acid. Also acts downstream of COQ4, for the C1-hydroxylation during ubiquinone biosynthesis by catalyzing the hydroxylation of 2-methoxy-6-(all-trans-hexaprenyl)phenol to 2-methoxy-6-(all-trans-hexaprenyl)benzene-1,4-diol. The electrons required for the hydroxylation reaction are funneled indirectly from NADPH via ferredoxin (YAH1) and ferredoxin reductase (ARH1) to COQ6. Can also convert 3-hexaprenyl-4-aminobenzoic acid (HAB), a COQ2-prenylated pABA, to DHHB in a two step process. HAB is first hydroxylated at C5 to yield 3-hexaprenyl-4-amino-5-hydroxybenzoic acid (HHAB) which is further deaminated at C4 by COQ6 to produce DHHB. In Saccharomyces cerevisiae (strain ATCC 204508 / S288c) (Baker's yeast), this protein is Ubiquinone biosynthesis monooxygenase COQ6, mitochondrial.